A 518-amino-acid chain; its full sequence is Protein nucleotidyltransferase YdiU (518 aa).

The ATP site is built by Gly100, Gly102, Arg103, Lys123, Asp135, Gly136, Arg193, and Arg200. Asp270 functions as the Proton acceptor in the catalytic mechanism. The Mg(2+) site is built by Asn271 and Asp280. Residue Asp280 coordinates ATP.

This sequence belongs to the SELO family. Mg(2+) is required as a cofactor. Mn(2+) serves as cofactor.

It catalyses the reaction L-seryl-[protein] + ATP = 3-O-(5'-adenylyl)-L-seryl-[protein] + diphosphate. The catalysed reaction is L-threonyl-[protein] + ATP = 3-O-(5'-adenylyl)-L-threonyl-[protein] + diphosphate. The enzyme catalyses L-tyrosyl-[protein] + ATP = O-(5'-adenylyl)-L-tyrosyl-[protein] + diphosphate. It carries out the reaction L-histidyl-[protein] + UTP = N(tele)-(5'-uridylyl)-L-histidyl-[protein] + diphosphate. It catalyses the reaction L-seryl-[protein] + UTP = O-(5'-uridylyl)-L-seryl-[protein] + diphosphate. The catalysed reaction is L-tyrosyl-[protein] + UTP = O-(5'-uridylyl)-L-tyrosyl-[protein] + diphosphate. Functionally, nucleotidyltransferase involved in the post-translational modification of proteins. It can catalyze the addition of adenosine monophosphate (AMP) or uridine monophosphate (UMP) to a protein, resulting in modifications known as AMPylation and UMPylation. This chain is Protein nucleotidyltransferase YdiU, found in Xanthomonas oryzae pv. oryzae (strain MAFF 311018).